The following is a 264-amino-acid chain: Small ribosomal subunit protein eS1 (264 aa).

A compositionally biased stretch (basic and acidic residues) spans 236-255 (GEGGSGKRGEAGDKSERPEG). A disordered region spans residues 236 to 264 (GEGGSGKRGEAGDKSERPEGYEPPVQESV).

It belongs to the eukaryotic ribosomal protein eS1 family. Component of the small ribosomal subunit. Mature ribosomes consist of a small (40S) and a large (60S) subunit. The 40S subunit contains about 33 different proteins and 1 molecule of RNA (18S). The 60S subunit contains about 49 different proteins and 3 molecules of RNA (28S, 5.8S and 5S).

It is found in the cytoplasm. This Spodoptera frugiperda (Fall armyworm) protein is Small ribosomal subunit protein eS1.